The sequence spans 234 residues: Probable transcriptional regulatory protein MYCGA1330 (234 aa).

The protein belongs to the TACO1 family.

The protein resides in the cytoplasm. This chain is Probable transcriptional regulatory protein MYCGA1330, found in Mycoplasmoides gallisepticum (strain R(low / passage 15 / clone 2)) (Mycoplasma gallisepticum).